A 145-amino-acid chain; its full sequence is Aegerolysin Aa-Pri1 (145 aa).

A propeptide spanning residues 1–8 (MDSNKDER) is cleaved from the precursor.

This sequence belongs to the aegerolysin family.

The protein is Aegerolysin Aa-Pri1 (AA-PRI1) of Cyclocybe aegerita (Black poplar mushroom).